Reading from the N-terminus, the 492-residue chain is BTB/POZ domain and ankyrin repeat-containing protein NOOT2 (492 aa).

One can recognise a BTB domain in the interval 25–107; sequence SDVTFQVEGR…LYSGQVSIVP (83 aa). The C2HC NPR-type zinc-finger motif lies at 113-127; that stretch reads RPNCGERGCWHTHCT. The Zn(2+) site is built by cysteine 116, cysteine 121, histidine 123, and cysteine 126. ANK repeat units follow at residues 248 to 277, 278 to 307, 312 to 341, and 345 to 379; these read QKIR…LNLD, EALA…DVNY, AGKT…DPTV, and DGVT…KLRL. 2 disordered regions span residues 395 to 439 and 455 to 492; these read ENNA…NSIG and TQMG…SHDF. Low complexity-rich tracts occupy residues 397–413 and 425–439; these read NASN…SSAA and SSSS…NSIG. A compositionally biased stretch (basic and acidic residues) spans 461 to 473; that stretch reads DDNRHNNSHREAM.

The protein belongs to the plant 'ANKYRIN-BTB/POZ' family. 'NOOT-BOP-COCH-like' (NBCL) subfamily. Homodimer.

The protein localises to the nucleus. It localises to the cytoplasm. It is found in the cell membrane. It functions in the pathway protein modification; protein ubiquitination. In terms of biological role, may act as a substrate-specific adapter of an E3 ubiquitin-protein ligase complex (CUL3-RBX1-BTB) which mediates the ubiquitination and subsequent proteasomal degradation of target proteins. Transcriptional co-regulator involved in the promotion of leaf and floral meristem fate and determinacy. Required for the abscission of senescent organs, probably by regulating the cell wall disorganization in abscission zones (AZs, e.g. pulvini at the base of leaves). Involved in the coordination of the symbiotic nodule developmental program; promotes the formation of root nodules by interacting directly with APP1 to modulate the expression of the nuclear transcription factor Y subunit (NF-YA1), a key nodulin. Involved in the regulation of indeterminate nodule identity in association with NOOT1. The protein is BTB/POZ domain and ankyrin repeat-containing protein NOOT2 of Medicago truncatula (Barrel medic).